Here is a 576-residue protein sequence, read N- to C-terminus: MAGUK p55 subfamily member 7 (576 aa).

2 L27 domains span residues 10–64 (CDMG…EKQN) and 65–122 (PLPI…YDPV). The PDZ domain occupies 139–220 (IIRLVKNSEP…AITFKIIPST (82 aa)). In terms of domain architecture, SH3 spans 228–298 (EGKIFIKALF…PSKHFQERRL (71 aa)). Residues 289–383 (PSKHFQERRL…VGPVGVGLNE (95 aa)) are phospho-regulated basic and hydrophobic (PRBH) motif. The region spanning 368 to 560 (YRLIVLVGPV…AFNELKTTFD (193 aa)) is the Guanylate kinase-like domain. Position 409 is a phosphoserine (S409).

This sequence belongs to the MAGUK family. Heterodimer; able to heterodimerize via its C-terminal L27 domain with LIN7A, LIN7B and LIN7C. Forms a tripartite complex composed of DLG1, MPP7 and LIN7 (LIN7A or LIN7C). Interacts with DLG1 via its N-terminal L27 domain. Interacts with PALS1 and PATJ. In terms of processing, phosphorylated by aPKC which promotes dissociation from the cell cortex.

The protein localises to the membrane. It is found in the lateral cell membrane. It localises to the cell junction. Its subcellular location is the tight junction. The protein resides in the adherens junction. The protein localises to the cytoplasm. It is found in the cell cortex. Its function is as follows. Acts as an important adapter that promotes epithelial cell polarity and tight junction formation via its interaction with DLG1. Involved in the assembly of protein complexes at sites of cell-cell contact. The chain is MAGUK p55 subfamily member 7 (Mpp7) from Mus musculus (Mouse).